The sequence spans 267 residues: Protein TIFY 7 (267 aa).

The 36-residue stretch at 113–148 folds into the Tify domain; it reads SSGSSPQLTIFYGGTISVFNDISPDKAQAIMLCAGN. The Jas motif lies at 220–244; it reads PQARKASLARFLEKRKERLMSAMPY. The Nuclear localization signal signature appears at 222-229; sequence ARKASLAR.

This sequence belongs to the TIFY/JAZ family. In terms of assembly, homo- and heterodimer. Interacts with MYC2, MYC3, MYC4, COI1, AFPH2/NINJA, TIFY10A/JAZ1, TIFY10B/JAZ2, TIFY6B/JAZ3, TIFY5A/JAZ8, TIFY9/JAZ10 and TIFY3A/JAZ11. Interacts with RHD6 and RSL1. Ubiquitinated. Targeted for degradation by the SCF(COI1) E3 ubiquitin ligase-proteasome pathway during jasmonate signaling.

Its subcellular location is the nucleus. Its function is as follows. Repressor of jasmonate responses. Jasmonoyl-isoleucine (JA-Ile) specifically promotes COI1-TIFY7/JAZ9 interaction. Interacts with and suppresses RHD6 and RSL1 transcription factor activities to negatively regulate jasmonate-stimulated root hair development. The sequence is that of Protein TIFY 7 (TIFY7) from Arabidopsis thaliana (Mouse-ear cress).